Consider the following 397-residue polypeptide: CCA-adding enzyme (397 aa).

ATP-binding residues include G27 and R30. Residues G27 and R30 each contribute to the CTP site. 2 residues coordinate Mg(2+): D40 and D42. ATP is bound by residues R111, D154, R157, R160, and R163. CTP is bound by residues R111, D154, R157, R160, and R163.

The protein belongs to the tRNA nucleotidyltransferase/poly(A) polymerase family. Bacterial CCA-adding enzyme type 3 subfamily. In terms of assembly, homodimer. Mg(2+) is required as a cofactor.

The enzyme catalyses a tRNA precursor + 2 CTP + ATP = a tRNA with a 3' CCA end + 3 diphosphate. The catalysed reaction is a tRNA with a 3' CCA end + 2 CTP + ATP = a tRNA with a 3' CCACCA end + 3 diphosphate. Its function is as follows. Catalyzes the addition and repair of the essential 3'-terminal CCA sequence in tRNAs without using a nucleic acid template. Adds these three nucleotides in the order of C, C, and A to the tRNA nucleotide-73, using CTP and ATP as substrates and producing inorganic pyrophosphate. Has no poly(A) polymerase activity. This Bacillus subtilis (strain 168) protein is CCA-adding enzyme.